Reading from the N-terminus, the 132-residue chain is MSMTDNVADMLTRIRNAYKSKLINVSFPSSKIKTSILDVLQKEGYIKDYITTQKNNISYTEVALKYSVNGDASICEIHRVSKPGKRVYSAIKDLKGYYNNMGIYILSTPYGVMSDREAHIKNVGGEVICKVF.

It belongs to the universal ribosomal protein uS8 family. As to quaternary structure, part of the 30S ribosomal subunit. Contacts proteins S5 and S12.

One of the primary rRNA binding proteins, it binds directly to 16S rRNA central domain where it helps coordinate assembly of the platform of the 30S subunit. The protein is Small ribosomal subunit protein uS8 of Rickettsia conorii (strain ATCC VR-613 / Malish 7).